A 428-amino-acid polypeptide reads, in one-letter code: RUN domain-containing protein 3A (428 aa).

The 131-residue stretch at 52 to 182 folds into the RUN domain; it reads DDSSEEFINF…IDFSFCLKGE (131 aa). Positions 237 to 314 form a coiled coil; sequence ESWRNKCRKM…ELQEQLTSLI (78 aa). The tract at residues 349–375 is disordered; sequence HRGSFPSPEPHISLTTGSQRTERKQNG.

This sequence belongs to the RUNDC3 family.

The polypeptide is RUN domain-containing protein 3A (rundc3a) (Danio rerio (Zebrafish)).